A 624-amino-acid polypeptide reads, in one-letter code: tRNA uridine 5-carboxymethylaminomethyl modification enzyme MnmG (624 aa).

FAD is bound by residues 13-18 (GGGHAG), V125, and S180. NAD(+) is bound at residue 273–287 (GPRYCPSIEDKIVRF). Q370 is a binding site for FAD.

The protein belongs to the MnmG family. Homodimer. Heterotetramer of two MnmE and two MnmG subunits. FAD is required as a cofactor.

Its subcellular location is the cytoplasm. NAD-binding protein involved in the addition of a carboxymethylaminomethyl (cmnm) group at the wobble position (U34) of certain tRNAs, forming tRNA-cmnm(5)s(2)U34. The protein is tRNA uridine 5-carboxymethylaminomethyl modification enzyme MnmG of Legionella pneumophila (strain Paris).